The chain runs to 209 residues: MAVLSEDVLLYLKEKNIPMLFEQIVQNIISDAPERPMSYIGDLMRRGIPLQIFIAGPAGSGKRTQCKNIADRLGVVLISSGQVLTRGVESGSETSQLAHSYVSRGERVPDTLVSMIMKDRLSQSDACEKGWLVEGYPRNAQQAQAVEECGVIPQVFILLDLPEDLSFRRLEHRRYDPATNKXYHMLDNPPPGGRCRVMRTAPAEGCKFP.

59–64 (GSGKRT) contributes to the ATP binding site. The segment at 79–108 (SSGQVLTRGVESGSETSQLAHSYVSRGERV) is NMP. Residues Ser80, 106–108 (ERV), 135–138 (GYPR), and Gln142 contribute to the AMP site. Residues 172-205 (HRRYDPATNKXYHMLDNPPPGGRCRVMRTAPAEG) form an LID region. Arg173 is an ATP binding site.

The protein belongs to the adenylate kinase family. As to quaternary structure, monomer.

It is found in the cytoplasm. It catalyses the reaction AMP + ATP = 2 ADP. Its function is as follows. Catalyzes the reversible transfer of the terminal phosphate group between ATP and AMP. Plays an important role in cellular energy homeostasis and in adenine nucleotide metabolism. The protein is Adenylate kinase of Trypanosoma brucei rhodesiense.